The following is a 1529-amino-acid chain: Slit homolog 2 protein (1529 aa).

The first 30 residues, 1–30, serve as a signal peptide directing secretion; sequence MRGVGWQMLSLSLGLVLAILNKVAPQACPA. In terms of domain architecture, LRRNT spans 31–55; sequence QCSCSGSTVDCHGLALRSVPRNIPR. 6 LRR repeats span residues 56-77, 80-101, 104-125, 128-149, 152-173, and 176-197; these read NTER…DFAG, HLRV…AFQD, ELER…LFLG, KLYR…AFRG, DIKN…AFRA, and DLEV…SFNH. Residue asparagine 66 is glycosylated (N-linked (GlcNAc...) asparagine). Asparagine 186 carries an N-linked (GlcNAc...) asparagine glycan. One can recognise an LRRCT 1 domain in the interval 209–259; that stretch reads NNLYCDCHLAWLSDWLRQRPRVGLYTQCMGPSHLRGHNVAEVQKREFVCSG. An LRRNT 2 domain is found at 264–300; the sequence is MAPSCSVLHCPAACTCSNNIVDCRGKGLTEIPTNLPE. Cysteine 277 and cysteine 286 are oxidised to a cystine. LRR repeat units follow at residues 301 to 322, 325 to 346, 349 to 370, 373 to 394, and 397 to 418; these read TITE…AFSP, KLRR…AFQG, SLNS…LFEG, SLQL…AFQD, and NLNL…TFSP. Residues 430-480 enclose the LRRCT 2 domain; sequence NPFICDCHLKWLADYLHTNPIETSGARCTSPRRLANKRIGQIKSKKFRCSA. Intrachain disulfides connect cysteine 434–cysteine 457, cysteine 436–cysteine 478, cysteine 506–cysteine 512, and cysteine 510–cysteine 519. Residues 497-533 enclose the LRRNT 3 domain; the sequence is SGDCFADLACPEKCRCEGTTVDCSNQKLNKIPEHIPQ. 5 LRR repeats span residues 534-555, 559-580, 583-604, 607-628, and 631-652; these read YTAE…GIFK, QLRK…AFEG, GVNE…MFKG, SLKT…SFIG, and SVRL…AFDT. N-linked (GlcNAc...) asparagine glycosylation occurs at asparagine 564. Asparagine 623 carries N-linked (GlcNAc...) asparagine glycosylation. The LRRCT 3 domain maps to 664-714; the sequence is NPFNCNCYLAWLGEWLRKKRIVTGNPRCQKPYFLKEIPIQDVAIQDFTCDD. 4 disulfides stabilise this stretch: cysteine 668–cysteine 691, cysteine 670–cysteine 712, cysteine 727–cysteine 733, and cysteine 731–cysteine 740. Residues 718-754 enclose the LRRNT 4 domain; it reads DNSCSPLSRCPTECTCLDTVVRCSNKGLKVLPKGIPR. LRR repeat units lie at residues 755-777, 778-799, 802-823, and 826-847; these read DVTE…SNYK, HLTL…SFSN, QLLT…TFDG, and SLRL…AFND. Residues asparagine 794 and asparagine 799 are each glycosylated (N-linked (GlcNAc...) asparagine). Residues 859–909 form the LRRCT 4 domain; the sequence is NPLYCDCNMQWLSDWVKSEYKEPGIARCAGPGEMADKLLLTTPSKKFTCQG. 20 cysteine pairs are disulfide-bonded: cysteine 863/cysteine 886, cysteine 865/cysteine 907, cysteine 922/cysteine 933, cysteine 927/cysteine 943, cysteine 945/cysteine 954, cysteine 961/cysteine 972, cysteine 966/cysteine 984, cysteine 986/cysteine 995, cysteine 1002/cysteine 1013, cysteine 1007/cysteine 1022, cysteine 1024/cysteine 1033, cysteine 1040/cysteine 1053, cysteine 1047/cysteine 1062, cysteine 1064/cysteine 1073, cysteine 1080/cysteine 1091, cysteine 1085/cysteine 1100, cysteine 1102/cysteine 1111, cysteine 1125/cysteine 1136, cysteine 1130/cysteine 1145, and cysteine 1147/cysteine 1156. EGF-like domains lie at 918 to 955 and 957 to 996; these read KCNP…QDCD and PIHA…ENCE. The EGF-like 3; calcium-binding domain maps to 998–1034; it reads NVDDCEDNDCENNSTCVDGINNYTCLCPPEYTGELCE. N-linked (GlcNAc...) asparagine glycosylation is found at asparagine 1009, asparagine 1010, and asparagine 1019. An EGF-like 4 domain is found at 1036 to 1074; it reads KLDFCAQDLNPCQHDSKCILTPKGFKCDCTPGYVGEHCD. Residues 1076 to 1112 form the EGF-like 5; calcium-binding domain; sequence DFDDCQDNKCKNGAHCTDAVNGYTCICPEGYSGLFCE. One can recognise an EGF-like 6 domain in the interval 1121–1157; it reads RTSPCDNFDCQNGAQCIVRINEPICQCLPGYQGEKCE. The Laminin G-like domain occupies 1160–1333; sequence VSVNFINKES…PMQTGILPGC (174 aa). Asparagine 1183, asparagine 1266, and asparagine 1300 each carry an N-linked (GlcNAc...) asparagine glycan. Cystine bridges form between cysteine 1307–cysteine 1333, cysteine 1336–cysteine 1346, cysteine 1341–cysteine 1356, cysteine 1358–cysteine 1367, cysteine 1375–cysteine 1385, cysteine 1380–cysteine 1395, cysteine 1397–cysteine 1406, cysteine 1416–cysteine 1426, cysteine 1421–cysteine 1436, cysteine 1438–cysteine 1447, cysteine 1453–cysteine 1492, cysteine 1471–cysteine 1506, cysteine 1482–cysteine 1522, and cysteine 1486–cysteine 1524. Residues 1332-1368 enclose the EGF-like 7 domain; that stretch reads GCEPCHKKVCAHGTCQPSSQAGFTCECQEGWMGPLCD. In terms of domain architecture, CTCK spans 1453-1528; that stretch reads CRGERIRDYY…VVKCGCTRCV (76 aa).

As to quaternary structure, interacts with GREM1. Homodimer. Binds ROBO1 and ROBO2 with high affinity. In terms of tissue distribution, fetal lung and kidney, and adult spinal cord. Weak expression in adult adrenal gland, thyroid, trachea and other tissues examined.

It localises to the secreted. Its function is as follows. Thought to act as molecular guidance cue in cellular migration, and function appears to be mediated by interaction with roundabout homolog receptors. During neural development involved in axonal navigation at the ventral midline of the neural tube and projection of axons to different regions. SLIT1 and SLIT2 seem to be essential for midline guidance in the forebrain by acting as repulsive signal preventing inappropriate midline crossing by axons projecting from the olfactory bulb. In spinal cord development may play a role in guiding commissural axons once they reached the floor plate by modulating the response to netrin. In vitro, silences the attractive effect of NTN1 but not its growth-stimulatory effect and silencing requires the formation of a ROBO1-DCC complex. May be implicated in spinal cord midline post-crossing axon repulsion. In vitro, only commissural axons that crossed the midline responded to SLIT2. In the developing visual system appears to function as repellent for retinal ganglion axons by providing a repulsion that directs these axons along their appropriate paths prior to, and after passage through, the optic chiasm. In vitro, collapses and repels retinal ganglion cell growth cones. Seems to play a role in branching and arborization of CNS sensory axons, and in neuronal cell migration. In vitro, Slit homolog 2 protein N-product, but not Slit homolog 2 protein C-product, repels olfactory bulb (OB) but not dorsal root ganglia (DRG) axons, induces OB growth cones collapse and induces branching of DRG axons. Seems to be involved in regulating leukocyte migration. This is Slit homolog 2 protein (SLIT2) from Homo sapiens (Human).